The primary structure comprises 319 residues: D-alanine--D-alanine ligase (319 aa).

Residues 120–315 (KRVLAQAGVP…YPELLRRLVE (196 aa)) enclose the ATP-grasp domain. 147–198 (DPPFFVKPANTGSSVGISRVERFQDLEAALALAFRYDEKAVVEKALSPVREL) provides a ligand contact to ATP. Residues Asp270, Glu282, and Asn284 each contribute to the Mg(2+) site.

This sequence belongs to the D-alanine--D-alanine ligase family. Mg(2+) serves as cofactor. Mn(2+) is required as a cofactor.

The protein resides in the cytoplasm. It catalyses the reaction 2 D-alanine + ATP = D-alanyl-D-alanine + ADP + phosphate + H(+). Its pathway is cell wall biogenesis; peptidoglycan biosynthesis. Its function is as follows. Cell wall formation. In Thermus thermophilus (strain ATCC 27634 / DSM 579 / HB8), this protein is D-alanine--D-alanine ligase.